The sequence spans 101 residues: MSTIADPRDILLAPVISEKSYGLIEEGTYTFLVHPDSNKTQIKIAVEKVFGVKVTSVNTANRQGKRKRTRFGYGKRKDTKRALVTLSADSKPIEIFGGPVA.

The protein belongs to the universal ribosomal protein uL23 family. In terms of assembly, part of the 50S ribosomal subunit. Contacts protein L29, and trigger factor when it is bound to the ribosome.

Functionally, one of the early assembly proteins it binds 23S rRNA. One of the proteins that surrounds the polypeptide exit tunnel on the outside of the ribosome. Forms the main docking site for trigger factor binding to the ribosome. The protein is Large ribosomal subunit protein uL23 of Rhodococcus erythropolis (strain PR4 / NBRC 100887).